We begin with the raw amino-acid sequence, 255 residues long: Glutamate racemase (255 aa).

Residues 7–8 (DS) and 39–40 (YG) contribute to the substrate site. The Proton donor/acceptor role is filled by Cys-70. Residue 71–72 (NT) coordinates substrate. Catalysis depends on Cys-181, which acts as the Proton donor/acceptor. A substrate-binding site is contributed by 182–183 (TH).

This sequence belongs to the aspartate/glutamate racemases family. As to quaternary structure, homodimer.

It catalyses the reaction L-glutamate = D-glutamate. It participates in cell wall biogenesis; peptidoglycan biosynthesis. Its function is as follows. Provides the (R)-glutamate required for cell wall biosynthesis. This Helicobacter pylori (strain J99 / ATCC 700824) (Campylobacter pylori J99) protein is Glutamate racemase.